Reading from the N-terminus, the 192-residue chain is Adenylate kinase (192 aa).

Residue 10-18 (GVPGVGGTT) participates in ATP binding.

The protein belongs to the archaeal adenylate kinase family. As to quaternary structure, monomer.

Its subcellular location is the cytoplasm. It carries out the reaction AMP + ATP = 2 ADP. The sequence is that of Adenylate kinase from Methanococcus maripaludis (strain DSM 14266 / JCM 13030 / NBRC 101832 / S2 / LL).